We begin with the raw amino-acid sequence, 131 residues long: Large ribosomal subunit protein eL32 (131 aa).

Belongs to the eukaryotic ribosomal protein eL32 family.

The polypeptide is Large ribosomal subunit protein eL32 (RPL32) (Eremothecium gossypii (strain ATCC 10895 / CBS 109.51 / FGSC 9923 / NRRL Y-1056) (Yeast)).